The following is a 258-amino-acid chain: DNA repair protein RecO (258 aa).

The protein belongs to the RecO family.

Involved in DNA repair and RecF pathway recombination. This is DNA repair protein RecO from Desulfatibacillum aliphaticivorans.